We begin with the raw amino-acid sequence, 606 residues long: Proton myo-inositol cotransporter hmit-1.1 (606 aa).

The Cytoplasmic segment spans residues 1–20 (MVAVAAFSSSGQDKPAHTPK). Residues 21 to 41 (LGLFVYILAAASVIGGFLFGY) form a helical membrane-spanning segment. Residues 42 to 63 (DTSVVSAAMLYMPDAPGLKPMD) lie on the Extracellular side of the membrane. The chain crosses the membrane as a helical span at residues 64–84 (TVWQEVLVSISPGMAAVGSLM). Residues 85–96 (SGTSSDYIGRRK) lie on the Cytoplasmic side of the membrane. Residues 97–117 (VILGASAIFTIGALVCAASVN) form a helical membrane-spanning segment. Position 118 (lysine 118) is a topological domain, extracellular. Residues 119-139 (IMLLVGRVLLGIAIGFASMIV) traverse the membrane as a helical segment. The Cytoplasmic segment spans residues 140-152 (PVYLGETAPTHVR). Residues 153–173 (GMLVAAFALMISFGQVVANIT) form a helical membrane-spanning segment. The Extracellular segment spans residues 174–188 (GGAFSYIDPYNVGWR). Residues 189–209 (LMFAFAAVPSIIQFVCFMFLP) traverse the membrane as a helical segment. The Cytoplasmic portion of the chain corresponds to 210-278 (ETPRWLYENG…RILKTPHVLK (69 aa)). Residues 279 to 299 (ACFIGSMLQAFQQLAGINTIL) form a helical membrane-spanning segment. Over 300-317 (YYTADIIRSSGISNNHTT) the chain is Extracellular. Residue asparagine 314 is glycosylated (N-linked (GlcNAc...) asparagine). Residues 318–338 (IWISVLLSLCNFIGPFVPMSL) form a helical membrane-spanning segment. Residues 339–345 (IEKVGRR) lie on the Cytoplasmic side of the membrane. A helical membrane pass occupies residues 346 to 366 (IIFLFSCGLVVLSLVFIGVAF). The Extracellular segment spans residues 367–464 (LLVNHDSAAT…EKYYCDTKYT (98 aa)). 2 N-linked (GlcNAc...) asparagine glycosylation sites follow: asparagine 387 and asparagine 445. The helical transmembrane segment at 465–485 (LLPIIACGVYLLTFSSGFTSL) threads the bilayer. Residues 486–501 (PWVLNSEFYPMWARST) lie on the Cytoplasmic side of the membrane. The chain crosses the membrane as a helical span at residues 502 to 522 (CVAISTTSNWVFNLIIALTYL). At 523–531 (SLTQVIGKY) the chain is on the extracellular side. Residues 532–552 (GAFWLYAGLTVIAFIFILFLV) traverse the membrane as a helical segment. The Cytoplasmic segment spans residues 553–606 (PETKGYSIEEVEMLFMNKKQRREAESRRRETVTEVRSRMNSTVSFGQHNEVHKY).

Belongs to the major facilitator superfamily. Sugar transporter (TC 2.A.1.1) family. As to expression, expressed in the intestine.

It localises to the cell membrane. The catalysed reaction is myo-inositol(out) + H(+)(out) = myo-inositol(in) + H(+)(in). H(+)-myo-inositol cotransporter. Probably by promoting the transport of myo-inositol regulates intracellular osmosis in response to hyperosmotic stress. This Caenorhabditis elegans protein is Proton myo-inositol cotransporter hmit-1.1.